We begin with the raw amino-acid sequence, 278 residues long: 3-methyl-2-oxobutanoate hydroxymethyltransferase (278 aa).

Residues D43 and D82 each contribute to the Mg(2+) site. 3-methyl-2-oxobutanoate is bound by residues 43–44 (DS), D82, and K112. E114 serves as a coordination point for Mg(2+). E181 functions as the Proton acceptor in the catalytic mechanism.

The protein belongs to the PanB family. In terms of assembly, homodecamer; pentamer of dimers. Requires Mg(2+) as cofactor.

The protein resides in the cytoplasm. It catalyses the reaction 3-methyl-2-oxobutanoate + (6R)-5,10-methylene-5,6,7,8-tetrahydrofolate + H2O = 2-dehydropantoate + (6S)-5,6,7,8-tetrahydrofolate. Its pathway is cofactor biosynthesis; (R)-pantothenate biosynthesis; (R)-pantoate from 3-methyl-2-oxobutanoate: step 1/2. Its function is as follows. Catalyzes the reversible reaction in which hydroxymethyl group from 5,10-methylenetetrahydrofolate is transferred onto alpha-ketoisovalerate to form ketopantoate. The polypeptide is 3-methyl-2-oxobutanoate hydroxymethyltransferase (Desulfitobacterium hafniense (strain DSM 10664 / DCB-2)).